We begin with the raw amino-acid sequence, 175 residues long: DPY30 domain-containing protein 1 (175 aa).

Positions 94–112 (QQKEKQKSEDFETGQEKSF) are enriched in basic and acidic residues. Disordered regions lie at residues 94–134 (QQKE…QAEE) and 152–175 (APNLSRVEELDEPMLSDNGVSAPP).

This sequence belongs to the dpy-30 family. As to quaternary structure, component of the axonemal radial spoke complex 1 (RS1), at least composed of spoke head proteins RSPH1, RSPH3, RSPH9 and the cilia-specific component RSPH4A or sperm-specific component RSPH6A, spoke stalk proteins RSPH14, DNAJB13, DYDC1, ROPN1L and NME5, and the anchor protein IQUB. Interacts with SH3GL3.

It is found in the cytoplasm. The protein resides in the cytoskeleton. Its subcellular location is the flagellum axoneme. Functions as part of axonemal radial spoke complexes that play an important part in the motility of sperm and cilia. Plays a crucial role during acrosome biogenesis. This chain is DPY30 domain-containing protein 1 (Dydc1), found in Mus musculus (Mouse).